Here is a 578-residue protein sequence, read N- to C-terminus: A-type ATP synthase subunit A (578 aa).

Residue 228 to 235 coordinates ATP; it reads GPFGSGKT.

It belongs to the ATPase alpha/beta chains family. In terms of assembly, has multiple subunits with at least A(3), B(3), C, D, E, F, H, I and proteolipid K(x).

It is found in the cell membrane. It catalyses the reaction ATP + H2O + 4 H(+)(in) = ADP + phosphate + 5 H(+)(out). Component of the A-type ATP synthase that produces ATP from ADP in the presence of a proton gradient across the membrane. The A chain is the catalytic subunit. This chain is A-type ATP synthase subunit A, found in Methanococcoides burtonii (strain DSM 6242 / NBRC 107633 / OCM 468 / ACE-M).